The chain runs to 511 residues: MTIILKPGSVPLETLEKIYREGLPVRIDPAFHAGIEKAAARIAEIAAGDAPVYGINTGFGKLASIRIAAGDVATLQRNLILSHCCGVGEPLSENIVRLIMALKLVSLGRGASGVRLEVITLIEAMLEKGVIPMIPEKGSVGASGDLAPLAHMTAAMIGEGEAFYRGERLSGAKALGKAGLKPVVLAAKEGLALINGTQTSTALALAGLFRAHRAVRTALITGALSTDAAMGSDAPFHEEIHQLRGHKGQIDAGRALRTLLEGSAIRRSHLEGDQRVQDPYCIRCQPQVDGACLDILRQAARTLEIEANAVTDNPLVLSDGRAVSGGNFHAEPVAFAADQIALAVCEIGAISQRRIALLVDPSLSFGLPAFLARKPGLNSGLMIAEVTSAALMSENNQMAHPASVDSTPTSANQEDHVSMACHGARRLLQMTANLNAIIGIEALTGALGVELRKPLTTSAELAKVIAALRAKVAALEEDRYMADDLKAAAELVADGTLSGVISAGILPDLET.

A cross-link (5-imidazolinone (Ala-Gly)) is located at residues 142 to 144 (ASG). Ser143 is modified (2,3-didehydroalanine (Ser)).

Belongs to the PAL/histidase family. Contains an active site 4-methylidene-imidazol-5-one (MIO), which is formed autocatalytically by cyclization and dehydration of residues Ala-Ser-Gly.

The protein localises to the cytoplasm. It catalyses the reaction L-histidine = trans-urocanate + NH4(+). Its pathway is amino-acid degradation; L-histidine degradation into L-glutamate; N-formimidoyl-L-glutamate from L-histidine: step 1/3. This Brucella suis (strain ATCC 23445 / NCTC 10510) protein is Histidine ammonia-lyase.